Consider the following 457-residue polypeptide: Multidrug resistance protein MdtK (457 aa).

The next 12 helical transmembrane spans lie at 11–31 (LLAL…MGVV), 46–66 (AVAV…GLLL), 93–113 (WLAF…DHII), 127–147 (AVGF…FQVL), 160–180 (GMVI…IFIY), 188–208 (LGGV…FLMM), 243–263 (LPVA…ALLV), 278–300 (LNFS…IRVG), 316–336 (YTSI…TVVF), 350–370 (VVVM…SDAI), 387–407 (IFFI…YLLG), and 418–438 (PSGF…LMAL).

This sequence belongs to the multi antimicrobial extrusion (MATE) (TC 2.A.66.1) family. MdtK subfamily.

It localises to the cell inner membrane. In terms of biological role, multidrug efflux pump that functions probably as a Na(+)/drug antiporter. The sequence is that of Multidrug resistance protein MdtK from Yersinia enterocolitica serotype O:8 / biotype 1B (strain NCTC 13174 / 8081).